A 394-amino-acid polypeptide reads, in one-letter code: Formate-dependent phosphoribosylglycinamide formyltransferase (394 aa).

N(1)-(5-phospho-beta-D-ribosyl)glycinamide contacts are provided by residues 22-23 (EL) and glutamate 82. Residues arginine 114, lysine 155, 160-165 (SSGKGQ), 195-198 (EGFV), and glutamate 203 contribute to the ATP site. The 190-residue stretch at 119–308 (RLAAETLKLP…EFALHVRAIL (190 aa)) folds into the ATP-grasp domain. Residues glutamate 267 and glutamate 279 each coordinate Mg(2+). N(1)-(5-phospho-beta-D-ribosyl)glycinamide is bound by residues aspartate 286, lysine 357, and 364–365 (RR).

It belongs to the PurK/PurT family. Homodimer.

The catalysed reaction is N(1)-(5-phospho-beta-D-ribosyl)glycinamide + formate + ATP = N(2)-formyl-N(1)-(5-phospho-beta-D-ribosyl)glycinamide + ADP + phosphate + H(+). The protein operates within purine metabolism; IMP biosynthesis via de novo pathway; N(2)-formyl-N(1)-(5-phospho-D-ribosyl)glycinamide from N(1)-(5-phospho-D-ribosyl)glycinamide (formate route): step 1/1. In terms of biological role, involved in the de novo purine biosynthesis. Catalyzes the transfer of formate to 5-phospho-ribosyl-glycinamide (GAR), producing 5-phospho-ribosyl-N-formylglycinamide (FGAR). Formate is provided by PurU via hydrolysis of 10-formyl-tetrahydrofolate. The protein is Formate-dependent phosphoribosylglycinamide formyltransferase of Tolumonas auensis (strain DSM 9187 / NBRC 110442 / TA 4).